We begin with the raw amino-acid sequence, 701 residues long: Polyribonucleotide nucleotidyltransferase (701 aa).

Mg(2+)-binding residues include Asp483 and Asp489. The KH domain maps to 550–609 (PRIYTLHIPTDKIRDVIGPGGKVIRGIIEQTGVKIDVEDDGTIHVASADEASANKAIQII). An S1 motif domain is found at 619-686 (GKTYLGKVVR…EGNKIKLSRK (68 aa)).

The protein belongs to the polyribonucleotide nucleotidyltransferase family. Mg(2+) is required as a cofactor.

It localises to the cytoplasm. It carries out the reaction RNA(n+1) + phosphate = RNA(n) + a ribonucleoside 5'-diphosphate. Involved in mRNA degradation. Catalyzes the phosphorolysis of single-stranded polyribonucleotides processively in the 3'- to 5'-direction. The polypeptide is Polyribonucleotide nucleotidyltransferase (Solibacter usitatus (strain Ellin6076)).